We begin with the raw amino-acid sequence, 591 residues long: Aspartate--tRNA(Asp/Asn) ligase (591 aa).

E174 serves as a coordination point for L-aspartate. The segment at 198-201 is aspartate; it reads QLFK. R220 contributes to the L-aspartate binding site. ATP-binding positions include 220-222 and Q229; that span reads RDE. H450 lines the L-aspartate pocket. E483 serves as a coordination point for ATP. L-aspartate is bound at residue R490. Position 535–538 (535–538) interacts with ATP; sequence GLDR.

It belongs to the class-II aminoacyl-tRNA synthetase family. Type 1 subfamily. In terms of assembly, homodimer.

The protein resides in the cytoplasm. It carries out the reaction tRNA(Asx) + L-aspartate + ATP = L-aspartyl-tRNA(Asx) + AMP + diphosphate. Its function is as follows. Aspartyl-tRNA synthetase with relaxed tRNA specificity since it is able to aspartylate not only its cognate tRNA(Asp) but also tRNA(Asn). Reaction proceeds in two steps: L-aspartate is first activated by ATP to form Asp-AMP and then transferred to the acceptor end of tRNA(Asp/Asn). The sequence is that of Aspartate--tRNA(Asp/Asn) ligase from Pseudomonas syringae pv. tomato (strain ATCC BAA-871 / DC3000).